The primary structure comprises 289 residues: NFIL3 like protein (289 aa).

Residues 1-27 (MDVGFSGLPDVSQSHSKTLWGARGRGP) form a disordered region. In terms of domain architecture, bZIP spans 42 to 105 (DTVYWEKRRK…GLLPLTGGPR (64 aa)). Residues 48–64 (KRRKNNEAAKRSREKRR) form a basic motif region. The leucine-zipper stretch occupies residues 70 to 91 (IEGRLAALMEENALLKGELKAL).

It belongs to the bZIP family. NFIL3 subfamily.

Its subcellular location is the nucleus. The protein is NFIL3 like protein of Homo sapiens (Human).